Consider the following 584-residue polypeptide: Pentatricopeptide repeat-containing protein At2g01510, mitochondrial (584 aa).

Residues 1–20 (MLAKQTPLTKQMLSELLRAS) constitute a mitochondrion transit peptide. PPR repeat units lie at residues 73-107 (RIFLWNTLFKGYVRNQLPFESLLLYKKMRDLGVRP), 108-142 (DEFTYPFVVKAISQLGDFSCGFALHAHVVKYGFGC), 143-173 (LGIVATELVMMYMKFGELSSAEFLFESMQVK), 174-208 (DLVAWNAFLAVCVQTGNSAIALEYFNKMCADAVQF), 209-243 (DSFTVVSMLSACGQLGSLEIGEEIYDRARKEEIDC), 244-274 (NIIVENARLDMHLKCGNTEAARVLFEEMKQR), 275-309 (NVVSWSTMIVGYAMNGDSREALTLFTTMQNEGLRP), 310-344 (NYVTFLGVLSACSHAGLVNEGKRYFSLMVQSNDKN), and 348-378 (RKEHYACMVDLLGRSGLLEEAYEFIKKMPVE). Residues 383 to 458 (IWGALLGACA…VAAYSSVEFE (76 aa)) are type E motif. The interval 459–489 (GKIHFFNRGDKSHPQSKAIYEKLDEILKKIR) is type E(+) motif. The type DYW motif stretch occupies residues 490 to 584 (KMGYVPDTCS…NGVCSCKEFW (95 aa)).

The protein belongs to the PPR family. PCMP-H subfamily.

The protein localises to the mitochondrion. The chain is Pentatricopeptide repeat-containing protein At2g01510, mitochondrial (PCMP-H37) from Arabidopsis thaliana (Mouse-ear cress).